An 83-amino-acid polypeptide reads, in one-letter code: Exodeoxyribonuclease 7 small subunit (83 aa).

The protein belongs to the XseB family. Heterooligomer composed of large and small subunits.

The protein localises to the cytoplasm. It catalyses the reaction Exonucleolytic cleavage in either 5'- to 3'- or 3'- to 5'-direction to yield nucleoside 5'-phosphates.. Functionally, bidirectionally degrades single-stranded DNA into large acid-insoluble oligonucleotides, which are then degraded further into small acid-soluble oligonucleotides. The protein is Exodeoxyribonuclease 7 small subunit of Rhizobium rhizogenes (strain K84 / ATCC BAA-868) (Agrobacterium radiobacter).